The chain runs to 199 residues: GTP cyclohydrolase-2 (199 aa).

49–53 contributes to the GTP binding site; sequence RIHSE. Zn(2+) contacts are provided by cysteine 54, cysteine 65, and cysteine 67. Residues glutamine 70, 92–94, and threonine 114 each bind GTP; that span reads EGR. The Proton acceptor role is filled by aspartate 126. Residue arginine 128 is the Nucleophile of the active site. The GTP site is built by threonine 149 and lysine 154. The disordered stretch occupies residues 172-199; sequence ETGRNPHNSHYLETKRGKLGHLLEGDSE.

It belongs to the GTP cyclohydrolase II family. Requires Zn(2+) as cofactor.

The enzyme catalyses GTP + 4 H2O = 2,5-diamino-6-hydroxy-4-(5-phosphoribosylamino)-pyrimidine + formate + 2 phosphate + 3 H(+). Its pathway is cofactor biosynthesis; riboflavin biosynthesis; 5-amino-6-(D-ribitylamino)uracil from GTP: step 1/4. In terms of biological role, catalyzes the conversion of GTP to 2,5-diamino-6-ribosylamino-4(3H)-pyrimidinone 5'-phosphate (DARP), formate and pyrophosphate. This chain is GTP cyclohydrolase-2, found in Teredinibacter turnerae (strain ATCC 39867 / T7901).